The following is a 1293-amino-acid chain: MEIIRGAPALSAFRVQQLMKACDAAAIPVRHIYAEFMHFAHLTNALNDTQTLQLASILTYGPAIEAHTPKGQLYLVTPRPGTISPWSSKATDIAHNCGLSQIKRLERGIAYYVEADTLDASQQKALQALLYDRMVEVIFDDMAAAETLFDRTEPKALASVNVLGEGRRALEVANSRLGLALAEDEIDYLVDNFVRLKRNPNDIELMMFAQANSEHCRHKIFNADWTIDGVVQDKSLFKMIKNTYAVTPDNVLSAYKDNAAVMTGSVAGRFFPDETGVYAYHVEPCHILMKVETHNHPTAISPYAGAATGSGGEIRDEGATGRGSKPKAGLVGFSVSNLNIPGFIQPWEAQYGKPERIVTPLEIMLEGPLGGAAFNNEFGRPALVGYFRTYEQEVSSHNGVEVRGYHKPIMLAGGLGNIREDHVQKGEITVGAKLIVLGGPAMNIGLGGGAASSMASGQSSEDLDFASVQRENPEMERRCQEVIDRCWQLGDDNPIQFIHDVGAGGLSNAFPELVNDADRGGRFNLRNVPSDEPGMSPLEIWCNESQERYVLSVAPENLARFEQICLRERAPFAVVGEATSEQHLTLADSHFNNKPIDLPLEVLLGKAPKMSRDVVSKKALSPALDESQITVDEAVTRILSLPTVADKSFLITIGDRSVTGLVNRDQMVGPWQVPVADCAVTAASFDTYAGEAMSIGERTPLALLDFGASARMAVAESIMNIAGTDIGSFKRIKLSANWMSAAGHPGEDAGLYEAVKAVGEELCPQLEITIPVGKDSMSMKTAWEDNGVHKSVTSPMSLVITAFGVVQDIRNTVTPELRSDKGDTALLLLDLSHGKTRLGGSCLAQVFSSLGDVAPDLDDSTTLKGFFEVMQTLVADQSILAYHDRSDGGLFTTVTEMAFAGNTGAEIDLSALQGSDLARLFNEELGAVIQVSQAQAEAITAQFIAAGVACHAIGGLTEHNKLVVKDGSRVVFQQQRSELRRLWSQTSYKMQALRDNPDCALEEFSLKQSETDPGLTVKLNFDPSQDVAAPYILKGIAPKMAILREQGVNSHVEMAAAFDRAGFESRDVHMSDILSGRISLDEFQGLVACGGFSYGDVLGAGEGWAKSILFNQRARDEFSRFFERDLSFALGVCNGCQMLSNLKEIIPGSEHWPRFVRNRSERFEARVSLVEVQQSPSLFFEGMAGSRMPIAVSHGEGLAEFASMQAMTAAESTGTVALRYVTGTGEIATQYPQNPNGSPNGLSGICSTDGKVTIMMPHPERVFRTVANSWHPDNWGEDSPWMRMFRNARVKLG.

Residues 305–316 (GAATGSGGEIRD) and A676 each bind ATP. Mg(2+)-binding residues include D677, E716, N720, and D884. S886 contacts ATP. Positions 1040–1293 (MAILREQGVN…MFRNARVKLG (254 aa)) constitute a Glutamine amidotransferase type-1 domain. C1133 functions as the Nucleophile in the catalytic mechanism. Catalysis depends on residues H1258 and E1260.

In the N-terminal section; belongs to the FGAMS family. In terms of assembly, monomer.

Its subcellular location is the cytoplasm. It catalyses the reaction N(2)-formyl-N(1)-(5-phospho-beta-D-ribosyl)glycinamide + L-glutamine + ATP + H2O = 2-formamido-N(1)-(5-O-phospho-beta-D-ribosyl)acetamidine + L-glutamate + ADP + phosphate + H(+). It participates in purine metabolism; IMP biosynthesis via de novo pathway; 5-amino-1-(5-phospho-D-ribosyl)imidazole from N(2)-formyl-N(1)-(5-phospho-D-ribosyl)glycinamide: step 1/2. Its function is as follows. Phosphoribosylformylglycinamidine synthase involved in the purines biosynthetic pathway. Catalyzes the ATP-dependent conversion of formylglycinamide ribonucleotide (FGAR) and glutamine to yield formylglycinamidine ribonucleotide (FGAM) and glutamate. This is Phosphoribosylformylglycinamidine synthase from Shewanella denitrificans (strain OS217 / ATCC BAA-1090 / DSM 15013).